Here is a 93-residue protein sequence, read N- to C-terminus: Large ribosomal subunit protein uL23cy (93 aa).

The protein belongs to the universal ribosomal protein uL23 family. In terms of assembly, part of the 50S ribosomal subunit.

It localises to the plastid. Its subcellular location is the chloroplast. Its function is as follows. Binds to 23S rRNA. This chain is Large ribosomal subunit protein uL23cy (rpl23-B), found in Agrostis stolonifera (Creeping bentgrass).